The primary structure comprises 397 residues: Elongation factor Tu (397 aa).

A tr-type G domain is found at 10–207 (LPHCNVGTIG…TLDSYIPQPE (198 aa)). A G1 region spans residues 19-26 (GHVDHGKT). 19 to 26 (GHVDHGKT) provides a ligand contact to GTP. Threonine 26 lines the Mg(2+) pocket. Residues 60–64 (GITIN) form a G2 region. Residues 81–84 (DCPG) form a G3 region. Residues 81-85 (DCPGH) and 136-139 (NKAD) each bind GTP. A G4 region spans residues 136–139 (NKAD). A G5 region spans residues 174 to 176 (SAR).

This sequence belongs to the TRAFAC class translation factor GTPase superfamily. Classic translation factor GTPase family. EF-Tu/EF-1A subfamily. As to quaternary structure, monomer.

It localises to the cytoplasm. It catalyses the reaction GTP + H2O = GDP + phosphate + H(+). In terms of biological role, GTP hydrolase that promotes the GTP-dependent binding of aminoacyl-tRNA to the A-site of ribosomes during protein biosynthesis. This chain is Elongation factor Tu, found in Pseudomonas syringae pv. tomato (strain ATCC BAA-871 / DC3000).